Consider the following 344-residue polypeptide: Protease HtpX homolog (344 aa).

3 helical membrane passes run 8–28 (VALGLYMLGYLFMFVIAATVA), 46–66 (ALTGVMIVLTTAFVIYLFVLV), and 74–94 (VSFLVGLIAFVVLMNLLTYVA). Histidine 172 lines the Zn(2+) pocket. Glutamate 173 is a catalytic residue. Histidine 176 provides a ligand contact to Zn(2+). Transmembrane regions (helical) follow at residues 183 to 203 (AIMLLFGVLPSVVYYLGVTAV) and 220 to 240 (LAVGVVAVLASFLIQLLVLAF). Glutamate 245 contributes to the Zn(2+) binding site.

Belongs to the peptidase M48B family. It depends on Zn(2+) as a cofactor.

Its subcellular location is the cell membrane. In Pyrobaculum calidifontis (strain DSM 21063 / JCM 11548 / VA1), this protein is Protease HtpX homolog.